The sequence spans 38 residues: Photosystem II reaction center protein L (38 aa).

A helical transmembrane segment spans residues 17 to 37; that stretch reads SLYWGLLLIFVLAILFSNYIF.

The protein belongs to the PsbL family. PSII is composed of 1 copy each of membrane proteins PsbA, PsbB, PsbC, PsbD, PsbE, PsbF, PsbH, PsbI, PsbJ, PsbK, PsbL, PsbM, PsbT, PsbX, PsbY, PsbZ, Psb30/Ycf12, at least 3 peripheral proteins of the oxygen-evolving complex and a large number of cofactors. It forms dimeric complexes.

The protein localises to the plastid. It localises to the chloroplast thylakoid membrane. One of the components of the core complex of photosystem II (PSII). PSII is a light-driven water:plastoquinone oxidoreductase that uses light energy to abstract electrons from H(2)O, generating O(2) and a proton gradient subsequently used for ATP formation. It consists of a core antenna complex that captures photons, and an electron transfer chain that converts photonic excitation into a charge separation. This subunit is found at the monomer-monomer interface and is required for correct PSII assembly and/or dimerization. The protein is Photosystem II reaction center protein L of Chlorokybus atmophyticus (Soil alga).